The sequence spans 273 residues: Putative pyruvate, phosphate dikinase regulatory protein (273 aa).

149-156 (GPSRTSKT) contributes to the ADP binding site.

This sequence belongs to the pyruvate, phosphate/water dikinase regulatory protein family. PDRP subfamily.

It carries out the reaction N(tele)-phospho-L-histidyl/L-threonyl-[pyruvate, phosphate dikinase] + ADP = N(tele)-phospho-L-histidyl/O-phospho-L-threonyl-[pyruvate, phosphate dikinase] + AMP + H(+). It catalyses the reaction N(tele)-phospho-L-histidyl/O-phospho-L-threonyl-[pyruvate, phosphate dikinase] + phosphate + H(+) = N(tele)-phospho-L-histidyl/L-threonyl-[pyruvate, phosphate dikinase] + diphosphate. Functionally, bifunctional serine/threonine kinase and phosphorylase involved in the regulation of the pyruvate, phosphate dikinase (PPDK) by catalyzing its phosphorylation/dephosphorylation. This chain is Putative pyruvate, phosphate dikinase regulatory protein, found in Rickettsia prowazekii (strain Madrid E).